The chain runs to 257 residues: Imidazole glycerol phosphate synthase subunit HisF (257 aa).

Catalysis depends on residues Asp12 and Asp131.

This sequence belongs to the HisA/HisF family. As to quaternary structure, heterodimer of HisH and HisF.

The protein localises to the cytoplasm. It carries out the reaction 5-[(5-phospho-1-deoxy-D-ribulos-1-ylimino)methylamino]-1-(5-phospho-beta-D-ribosyl)imidazole-4-carboxamide + L-glutamine = D-erythro-1-(imidazol-4-yl)glycerol 3-phosphate + 5-amino-1-(5-phospho-beta-D-ribosyl)imidazole-4-carboxamide + L-glutamate + H(+). It functions in the pathway amino-acid biosynthesis; L-histidine biosynthesis; L-histidine from 5-phospho-alpha-D-ribose 1-diphosphate: step 5/9. IGPS catalyzes the conversion of PRFAR and glutamine to IGP, AICAR and glutamate. The HisF subunit catalyzes the cyclization activity that produces IGP and AICAR from PRFAR using the ammonia provided by the HisH subunit. The sequence is that of Imidazole glycerol phosphate synthase subunit HisF from Teredinibacter turnerae (strain ATCC 39867 / T7901).